The primary structure comprises 98 residues: MQIELTDAAVTWFKNELELPENNKVLVFFVRYGGEFQLKQGFSPAFTVEPKEDVDIGYEQQYDDLNVVIAEKDLWYFEDDHIIVNVVDHEDEISYSKK.

This sequence belongs to the HesB/IscA family.

This is an uncharacterized protein from Staphylococcus aureus (strain MRSA252).